The primary structure comprises 287 residues: Vesicle-associated protein 4-3 (287 aa).

Basic and acidic residues predominate over residues M1–R14. A disordered region spans residues M1–V45. The segment covering S25–V45 has biased composition (low complexity). Positions R99–L221 constitute an MSP domain.

Belongs to the VAMP-associated protein (VAP) (TC 9.B.17) family.

May play a role in vesicle trafficking. This Arabidopsis thaliana (Mouse-ear cress) protein is Vesicle-associated protein 4-3 (PVA43).